Consider the following 486-residue polypeptide: Glutamyl-tRNA(Gln) amidotransferase subunit A (486 aa).

Residues Lys-74 and Ser-149 each act as charge relay system in the active site. Ser-173 acts as the Acyl-ester intermediate in catalysis.

The protein belongs to the amidase family. GatA subfamily. In terms of assembly, heterotrimer of A, B and C subunits.

The catalysed reaction is L-glutamyl-tRNA(Gln) + L-glutamine + ATP + H2O = L-glutaminyl-tRNA(Gln) + L-glutamate + ADP + phosphate + H(+). Its function is as follows. Allows the formation of correctly charged Gln-tRNA(Gln) through the transamidation of misacylated Glu-tRNA(Gln) in organisms which lack glutaminyl-tRNA synthetase. The reaction takes place in the presence of glutamine and ATP through an activated gamma-phospho-Glu-tRNA(Gln). This is Glutamyl-tRNA(Gln) amidotransferase subunit A from Prochlorococcus marinus (strain MIT 9303).